Reading from the N-terminus, the 39-residue chain is TIINVKCTSPKQCLKPCKDLYGPHAGEKCMNGKCKCYKI.

3 disulfides stabilise this stretch: Cys-7–Cys-29, Cys-13–Cys-34, and Cys-17–Cys-36. Ile-39 carries the isoleucine amide modification.

Belongs to the short scorpion toxin superfamily. Potassium channel inhibitor family. Alpha-KTx 02 subfamily. As to expression, expressed by the venom gland.

It localises to the secreted. Functionally, blocks human voltage-gated potassium channels Kv1.2/KCNA2 (IC(50)=0.7 nM), Kv1.3/KCNA3 (IC(50)=26.2 nM) and blocks intermediate conductance calcium-activated potassium channel KCa3.1/KCNN4 (IC(50)=56 nM). This is Potassium channel toxin alpha-KTx 2.16 from Centruroides tecomanus (Scorpion).